The sequence spans 357 residues: D-alanine--D-alanine ligase (357 aa).

The ATP-grasp domain occupies 134–339 (KQLFEHRGLP…YPDLIAKLID (206 aa)). 167 to 222 (NDKLTYPVFVKPANLGSSVGISKCNNEEELKSGIAEAFQFDRKLVIEQGINAREIE) contacts ATP. Mg(2+) contacts are provided by aspartate 293, glutamate 306, and asparagine 308.

The protein belongs to the D-alanine--D-alanine ligase family. Mg(2+) is required as a cofactor. The cofactor is Mn(2+).

It is found in the cytoplasm. It carries out the reaction 2 D-alanine + ATP = D-alanyl-D-alanine + ADP + phosphate + H(+). The protein operates within cell wall biogenesis; peptidoglycan biosynthesis. In terms of biological role, cell wall formation. In Staphylococcus epidermidis (strain ATCC 35984 / DSM 28319 / BCRC 17069 / CCUG 31568 / BM 3577 / RP62A), this protein is D-alanine--D-alanine ligase.